The primary structure comprises 792 residues: Probable exo-1,4-beta-xylosidase xlnD (792 aa).

The first 20 residues, 1-20 (MSVAKSIAAVLVALLPGALA), serve as a signal peptide directing secretion. Asn23, Asn87, Asn118, Asn142, and Asn246 each carry an N-linked (GlcNAc...) asparagine glycan. Asp310 is an active-site residue. N-linked (GlcNAc...) asparagine glycosylation is found at Asn326, Asn385, Asn404, Asn440, Asn477, Asn518, Asn679, and Asn701.

It belongs to the glycosyl hydrolase 3 family.

The protein resides in the secreted. It catalyses the reaction Hydrolysis of (1-&gt;4)-beta-D-xylans, to remove successive D-xylose residues from the non-reducing termini.. The protein operates within glycan degradation; xylan degradation. Functionally, xylan 1,4-beta-xylosidase involved in the hydrolysis of xylan, a major structural heterogeneous polysaccharide found in plant biomass representing the second most abundant polysaccharide in the biosphere, after cellulose. In Aspergillus fumigatus (strain CBS 144.89 / FGSC A1163 / CEA10) (Neosartorya fumigata), this protein is Probable exo-1,4-beta-xylosidase xlnD (xlnD).